Reading from the N-terminus, the 100-residue chain is Succinate dehydrogenase assembly factor 4, mitochondrial (100 aa).

A mitochondrion-targeting transit peptide spans 1–31 (MFNRNLRAVILKNYNKALTRCLHDAGNLKRP). Positions 24–100 (DAGNLKRPTP…YSYEGRVTDF (77 aa)) are disordered. 2 stretches are compositionally biased toward basic and acidic residues: residues 36-68 (LPKE…KDFE) and 85-100 (PTVH…VTDF).

This sequence belongs to the SDHAF4 family. As to quaternary structure, interacts with sdh1 in its FAD-bound form.

It is found in the mitochondrion matrix. Its function is as follows. Plays an essential role in the assembly of succinate dehydrogenase (SDH), an enzyme complex (also referred to as respiratory complex II) that is a component of both the tricarboxylic acid (TCA) cycle and the mitochondrial electron transport chain, and which couples the oxidation of succinate to fumarate with the reduction of ubiquinone (coenzyme Q) to ubiquinol. Binds to the flavoprotein subunit sdh1 in its FAD-bound form, blocking the generation of excess reactive oxygen species (ROS) and facilitating its assembly with the iron-sulfur protein subunit sdh2 into the SDH catalytic dimer. The polypeptide is Succinate dehydrogenase assembly factor 4, mitochondrial (Schizosaccharomyces pombe (strain 972 / ATCC 24843) (Fission yeast)).